A 108-amino-acid chain; its full sequence is Integration host factor subunit alpha (108 aa).

The protein belongs to the bacterial histone-like protein family. Heterodimer of an alpha and a beta chain.

Its function is as follows. This protein is one of the two subunits of integration host factor, a specific DNA-binding protein that functions in genetic recombination as well as in transcriptional and translational control. This chain is Integration host factor subunit alpha, found in Bartonella henselae (strain ATCC 49882 / DSM 28221 / CCUG 30454 / Houston 1) (Rochalimaea henselae).